The following is a 221-amino-acid chain: Triosephosphate isomerase (221 aa).

8–10 (NLK) contacts substrate. The Electrophile role is filled by His92. Glu140 functions as the Proton acceptor in the catalytic mechanism. Substrate-binding positions include Ile145, Gly180, and 201-202 (AS).

It belongs to the triosephosphate isomerase family. In terms of assembly, homotetramer; dimer of dimers.

It is found in the cytoplasm. It catalyses the reaction D-glyceraldehyde 3-phosphate = dihydroxyacetone phosphate. It participates in carbohydrate biosynthesis; gluconeogenesis. It functions in the pathway carbohydrate degradation; glycolysis; D-glyceraldehyde 3-phosphate from glycerone phosphate: step 1/1. Involved in the gluconeogenesis. Catalyzes stereospecifically the conversion of dihydroxyacetone phosphate (DHAP) to D-glyceraldehyde-3-phosphate (G3P). This chain is Triosephosphate isomerase, found in Methanococcoides burtonii (strain DSM 6242 / NBRC 107633 / OCM 468 / ACE-M).